Consider the following 400-residue polypeptide: NAD-dependent protein deacetylase sirtuin-7 (400 aa).

Residues 1 to 27 (MAAGGLSRSERKAAERVRRLREEQQRE) form a disordered region. Residues 8–27 (RSERKAAERVRRLREEQQRE) show a composition bias toward basic and acidic residues. One can recognise a Deacetylase sirtuin-type domain in the interval 82-329 (PEELRGKVRE…RLLMAELGLE (248 aa)). NAD(+)-binding positions include 107–126 (GAGI…NGVW) and 167–170 (QNCD). His187 functions as the Proton acceptor in the catalytic mechanism. Residues Cys195, Cys198, Cys225, and Cys228 each coordinate Zn(2+). NAD(+) contacts are provided by residues 268-270 (GSS), 297-299 (NLQ), and Cys315. The tract at residues 354 to 380 (SHSRKSLCRSREEAPPGDRGAPLSSAP) is disordered. Position 388 is an asymmetric dimethylarginine; alternate (Arg388). Arg388 bears the Omega-N-methylarginine; alternate mark.

It belongs to the sirtuin family. Class IV subfamily. As to quaternary structure, interacts with UBTF and the RNA polymerase I complex. Interacts with components of the B-WICH complex, such as MYBBP1A, SMARCA5/SNF2H and BAZ1B/WSTF. Interacts with ELK4, leading to stabilization at target promoters for H3K18Ac deacetylation. Interacts with histone H2A and/or histone H2B. Interacts with DNMT1. Interacts with SIRT1. Requires Zn(2+) as cofactor. In terms of processing, phosphorylated during mitosis. Methylation at Arg-388 by PRMT6 inhibits the H3K18Ac histone deacetylase activity, promoting mitochondria biogenesis and maintaining mitochondria respiration. Post-translationally, ubiquitinated via 'Lys-63'-linked ubiquitin chains. Deubiquitinated by USP7, inhibiting the H3K18Ac histone deacetylase activity and regulating gluconeogenesis. Ubiquitinated by E3 ubiquitin-protein ligase complex containing FBXO7; leading to proteasomal degradation.

The protein localises to the nucleus. Its subcellular location is the nucleolus. The protein resides in the nucleoplasm. It localises to the chromosome. It is found in the cytoplasm. The enzyme catalyses N(6)-acetyl-L-lysyl-[protein] + NAD(+) + H2O = 2''-O-acetyl-ADP-D-ribose + nicotinamide + L-lysyl-[protein]. The catalysed reaction is N(6)-glutaryl-L-lysyl-[protein] + NAD(+) + H2O = 2''-O-glutaryl-ADP-D-ribose + nicotinamide + L-lysyl-[protein]. It carries out the reaction N(6)-succinyl-L-lysyl-[protein] + NAD(+) + H2O = 2''-O-succinyl-ADP-D-ribose + nicotinamide + L-lysyl-[protein]. It catalyses the reaction N(6)-propanoyl-L-lysyl-[protein] + NAD(+) + H2O = 3''-O-propanoyl-ADP-D-ribose + nicotinamide + L-lysyl-[protein]. The enzyme catalyses N(6)-decanoyl-L-lysyl-[protein] + NAD(+) + H2O = 2''-O-decanoyl-ADP-D-ribose + nicotinamide + L-lysyl-[protein]. With respect to regulation, NAD-dependent protein-lysine deacetylase and deacylase activities are activated by nucleic acids. Histone deacetylase activity is activated by DNA and nucleosomes. Protein-lysine deacylase activity is activated by RNA. H3K18Ac histone deacetylase activity is inhibited by methylation at Arg-388. H3K18Ac histone deacetylase activity is inhibited by deubiquitination by USP7. NAD-dependent protein-lysine deacylase that can act both as a deacetylase or deacylase (desuccinylase, depropionylase, deglutarylase and dedecanoylase), depending on the context. Specifically mediates deacetylation of histone H3 at 'Lys-18' (H3K18Ac). In contrast to other histone deacetylases, displays strong preference for a specific histone mark, H3K18Ac, directly linked to control of gene expression. H3K18Ac is mainly present around the transcription start site of genes and has been linked to activation of nuclear hormone receptors; SIRT7 thereby acts as a transcription repressor. Moreover, H3K18 hypoacetylation has been reported as a marker of malignancy in various cancers and seems to maintain the transformed phenotype of cancer cells. Also able to mediate deacetylation of histone H3 at 'Lys-36' (H3K36Ac) in the context of nucleosomes. Also mediates deacetylation of non-histone proteins, such as ATM, CDK9, DDX21, DDB1, FBL, FKBP5/FKBP51, GABPB1, RAN, RRP9/U3-55K and POLR1E/PAF53. Enriched in nucleolus where it stimulates transcription activity of the RNA polymerase I complex. Acts by mediating the deacetylation of the RNA polymerase I subunit POLR1E/PAF53, thereby promoting the association of RNA polymerase I with the rDNA promoter region and coding region. In response to metabolic stress, SIRT7 is released from nucleoli leading to hyperacetylation of POLR1E/PAF53 and decreased RNA polymerase I transcription. Required to restore the transcription of ribosomal RNA (rRNA) at the exit from mitosis. Promotes pre-ribosomal RNA (pre-rRNA) cleavage at the 5'-terminal processing site by mediating deacetylation of RRP9/U3-55K, a core subunit of the U3 snoRNP complex. Mediates 'Lys-37' deacetylation of Ran, thereby regulating the nuclear export of NF-kappa-B subunit RELA/p65. Acts as a regulator of DNA damage repair by mediating deacetylation of ATM during the late stages of DNA damage response, promoting ATM dephosphorylation and deactivation. Suppresses the activity of the DCX (DDB1-CUL4-X-box) E3 ubiquitin-protein ligase complexes by mediating deacetylation of DDB1, which prevents the interaction between DDB1 and CUL4 (CUL4A or CUL4B). Activates RNA polymerase II transcription by mediating deacetylation of CDK9, thereby promoting 'Ser-2' phosphorylation of the C-terminal domain (CTD) of RNA polymerase II. Deacetylates FBL, promoting histone-glutamine methyltransferase activity of FBL. Acts as a regulator of mitochondrial function by catalyzing deacetylation of GABPB1. Regulates Akt/AKT1 activity by mediating deacetylation of FKBP5/FKBP51. Required to prevent R-loop-associated DNA damage and transcription-associated genomic instability by mediating deacetylation and subsequent activation of DDX21, thereby overcoming R-loop-mediated stalling of RNA polymerases. In addition to protein deacetylase activity, also acts as a protein-lysine deacylase. Acts as a protein depropionylase by mediating depropionylation of Osterix (SP7), thereby regulating bone formation by osteoblasts. Acts as a histone deglutarylase by mediating deglutarylation of histone H4 on 'Lys-91' (H4K91glu); a mark that destabilizes nucleosomes by promoting dissociation of the H2A-H2B dimers from nucleosomes. Acts as a histone desuccinylase: in response to DNA damage, recruited to DNA double-strand breaks (DSBs) and catalyzes desuccinylation of histone H3 on 'Lys-122' (H3K122succ), thereby promoting chromatin condensation and DSB repair. Also promotes DSB repair by promoting H3K18Ac deacetylation, regulating non-homologous end joining (NHEJ). Along with its role in DNA repair, required for chromosome synapsis during prophase I of female meiosis by catalyzing H3K18Ac deacetylation. Involved in transcriptional repression of LINE-1 retrotransposon via H3K18Ac deacetylation, and promotes their association with the nuclear lamina. Required to stabilize ribosomal DNA (rDNA) heterochromatin and prevent cellular senescence induced by rDNA instability. Acts as a negative regulator of SIRT1 by preventing autodeacetylation of SIRT1, restricting SIRT1 deacetylase activity. In Homo sapiens (Human), this protein is NAD-dependent protein deacetylase sirtuin-7.